We begin with the raw amino-acid sequence, 401 residues long: Nicotinate phosphoribosyltransferase (401 aa).

Histidine 221 is modified (phosphohistidine; by autocatalysis).

The protein belongs to the NAPRTase family. Transiently phosphorylated on a His residue during the reaction cycle. Phosphorylation strongly increases the affinity for substrates and increases the rate of nicotinate D-ribonucleotide production. Dephosphorylation regenerates the low-affinity form of the enzyme, leading to product release.

The enzyme catalyses nicotinate + 5-phospho-alpha-D-ribose 1-diphosphate + ATP + H2O = nicotinate beta-D-ribonucleotide + ADP + phosphate + diphosphate. The protein operates within cofactor biosynthesis; NAD(+) biosynthesis; nicotinate D-ribonucleotide from nicotinate: step 1/1. Catalyzes the synthesis of beta-nicotinate D-ribonucleotide from nicotinate and 5-phospho-D-ribose 1-phosphate at the expense of ATP. The chain is Nicotinate phosphoribosyltransferase from Edwardsiella ictaluri (strain 93-146).